Consider the following 177-residue polypeptide: Large ribosomal subunit protein uL6 (177 aa).

It belongs to the universal ribosomal protein uL6 family. In terms of assembly, part of the 50S ribosomal subunit.

This protein binds to the 23S rRNA, and is important in its secondary structure. It is located near the subunit interface in the base of the L7/L12 stalk, and near the tRNA binding site of the peptidyltransferase center. The protein is Large ribosomal subunit protein uL6 of Vibrio atlanticus (strain LGP32) (Vibrio splendidus (strain Mel32)).